Consider the following 465-residue polypeptide: Iron-sulfur cluster assembly SufBD family protein SERP0500 (465 aa).

The protein belongs to the iron-sulfur cluster assembly SufBD family.

This Staphylococcus epidermidis (strain ATCC 35984 / DSM 28319 / BCRC 17069 / CCUG 31568 / BM 3577 / RP62A) protein is Iron-sulfur cluster assembly SufBD family protein SERP0500.